The chain runs to 206 residues: Dephospho-CoA kinase (206 aa).

A DPCK domain is found at 4–200 (TVALTGGIGS…ASYLKLASQF (197 aa)). 12–17 (GSGKST) provides a ligand contact to ATP.

The protein belongs to the CoaE family.

It is found in the cytoplasm. It catalyses the reaction 3'-dephospho-CoA + ATP = ADP + CoA + H(+). The protein operates within cofactor biosynthesis; coenzyme A biosynthesis; CoA from (R)-pantothenate: step 5/5. Its function is as follows. Catalyzes the phosphorylation of the 3'-hydroxyl group of dephosphocoenzyme A to form coenzyme A. This chain is Dephospho-CoA kinase, found in Salmonella typhimurium (strain LT2 / SGSC1412 / ATCC 700720).